The chain runs to 192 residues: Protein GrpE (192 aa).

The disordered stretch occupies residues 1-41 (MSKEEFPHEKDLKDEVTPDKAPKKDPKAAPKEEVKENPVEN).

It belongs to the GrpE family. As to quaternary structure, homodimer.

It is found in the cytoplasm. Participates actively in the response to hyperosmotic and heat shock by preventing the aggregation of stress-denatured proteins, in association with DnaK and GrpE. It is the nucleotide exchange factor for DnaK and may function as a thermosensor. Unfolded proteins bind initially to DnaJ; upon interaction with the DnaJ-bound protein, DnaK hydrolyzes its bound ATP, resulting in the formation of a stable complex. GrpE releases ADP from DnaK; ATP binding to DnaK triggers the release of the substrate protein, thus completing the reaction cycle. Several rounds of ATP-dependent interactions between DnaJ, DnaK and GrpE are required for fully efficient folding. The sequence is that of Protein GrpE from Lactobacillus johnsonii (strain CNCM I-12250 / La1 / NCC 533).